A 200-amino-acid polypeptide reads, in one-letter code: NAD(P)H dehydrogenase (quinone) (200 aa).

The Flavodoxin-like domain occupies 4–190 (VLVLYYSTYG…DGARFQGRLV (187 aa)). FMN is bound by residues 10–15 (STYGHL) and 78–80 (TRF). Tyr12 contacts NAD(+). Trp98 is a binding site for substrate. Residues 113 to 119 (STATQHG) and His134 contribute to the FMN site.

The protein belongs to the WrbA family. The cofactor is FMN.

The catalysed reaction is a quinone + NADH + H(+) = a quinol + NAD(+). It carries out the reaction a quinone + NADPH + H(+) = a quinol + NADP(+). This chain is NAD(P)H dehydrogenase (quinone), found in Acidovorax ebreus (strain TPSY) (Diaphorobacter sp. (strain TPSY)).